A 61-amino-acid chain; its full sequence is Protein SspF (61 aa).

Belongs to the alpha/beta-type SASP family.

In terms of biological role, may play some important role in either sporulation or the dormant spore. This is Protein SspF (sspF) from Bacillus subtilis (strain 168).